Consider the following 225-residue polypeptide: Dynein axonemal assembly factor 19 (225 aa).

Residues aspartate 8–alanine 32 adopt a coiled-coil conformation.

Belongs to the DNAAF19/PR46b family. In terms of assembly, homodimer.

The protein resides in the cytoplasm. It localises to the cell projection. Its subcellular location is the cilium. The protein localises to the flagellum. In terms of biological role, dynein-attachment factor required for cilia motility. This Xenopus tropicalis (Western clawed frog) protein is Dynein axonemal assembly factor 19 (dnaaf19).